A 176-amino-acid chain; its full sequence is NAD(P)H-quinone oxidoreductase subunit 6, chloroplastic (176 aa).

5 helical membrane-spanning segments follow: residues 10–30 (FLLVFLGSGLILGGLGVVLLP), 32–52 (PIYSAFSLGLVLVCTSLFYIL), 61–81 (AQLLIYVGAINVLIIFAVMFM), 92–112 (LWTVGDGITSMVCISLFISLI), and 152–172 (FFLPFELISIILLVALIGAIA).

This sequence belongs to the complex I subunit 6 family. In terms of assembly, NDH is composed of at least 16 different subunits, 5 of which are encoded in the nucleus.

The protein resides in the plastid. It localises to the chloroplast thylakoid membrane. The catalysed reaction is a plastoquinone + NADH + (n+1) H(+)(in) = a plastoquinol + NAD(+) + n H(+)(out). It carries out the reaction a plastoquinone + NADPH + (n+1) H(+)(in) = a plastoquinol + NADP(+) + n H(+)(out). Its function is as follows. NDH shuttles electrons from NAD(P)H:plastoquinone, via FMN and iron-sulfur (Fe-S) centers, to quinones in the photosynthetic chain and possibly in a chloroplast respiratory chain. The immediate electron acceptor for the enzyme in this species is believed to be plastoquinone. Couples the redox reaction to proton translocation, and thus conserves the redox energy in a proton gradient. In Nicotiana tabacum (Common tobacco), this protein is NAD(P)H-quinone oxidoreductase subunit 6, chloroplastic (ndhG).